A 397-amino-acid chain; its full sequence is NADH-quinone oxidoreductase subunit H (397 aa).

9 consecutive transmembrane segments (helical) span residues 7–27, 78–98, 120–140, 164–184, 195–215, 247–267, 283–303, 322–342, and 353–373; these read ALLI…TAFA, LVYT…FGGI, ILAL…GGWA, MGLS…LDIV, WLIL…FAEV, MAEY…FFGG, SWPL…FIWV, LTLP…AFVP, and WLLG…SDAV.

This sequence belongs to the complex I subunit 1 family. NDH-1 is composed of 15 different subunits. Subunits NuoA, H, J, K, L, M, N constitute the membrane sector of the complex.

The protein localises to the cell membrane. The enzyme catalyses a quinone + NADH + 5 H(+)(in) = a quinol + NAD(+) + 4 H(+)(out). NDH-1 shuttles electrons from NADH, via FMN and iron-sulfur (Fe-S) centers, to quinones in the respiratory chain. The immediate electron acceptor for the enzyme in this species is believed to be ubiquinone. Couples the redox reaction to proton translocation (for every two electrons transferred, four hydrogen ions are translocated across the cytoplasmic membrane), and thus conserves the redox energy in a proton gradient. This subunit may bind ubiquinone. The chain is NADH-quinone oxidoreductase subunit H from Deinococcus radiodurans (strain ATCC 13939 / DSM 20539 / JCM 16871 / CCUG 27074 / LMG 4051 / NBRC 15346 / NCIMB 9279 / VKM B-1422 / R1).